Here is a 600-residue protein sequence, read N- to C-terminus: Proton channel OTOP1 (600 aa).

A disordered region spans residues 1 to 50 (MPGDRGALSSPAASSGSPSAAPSGIAACPPPPSPLARASPQASGPRRGAS). The Cytoplasmic segment spans residues 1-56 (MPGDRGALSSPAASSGSPSAAPSGIAACPPPPSPLARASPQASGPRRGASVPQKLA). Low complexity predominate over residues 7–27 (ALSSPAASSGSPSAAPSGIAA). Residues 57 to 78 (ETLSSQYGLNVFVAGLLFLLAW) form a helical membrane-spanning segment. Residues 79–86 (AVHATGVG) lie on the Extracellular side of the membrane. Residues 87 to 110 (KSDLLCVLTALMLLQLLWMLWYVG) form a helical membrane-spanning segment. The Cytoplasmic segment spans residues 111-128 (RSYMQRRLIRPKDTHAGA). The helical transmembrane segment at 129–151 (RWLRGSITLFAFITIVLGCLKVA) threads the bilayer. Residues 152 to 161 (YFIGFSECLS) are Extracellular-facing. The helical transmembrane segment at 162-186 (ATEGVFPVTHAVHTLLQVYFLWGHA) threads the bilayer. Residues 187–194 (KDIIMSFK) are Cytoplasmic-facing. Residues 195–221 (TLERFGVIHSVFTNLLLWANSVLNESK) traverse the membrane as a helical segment. Residues 222–262 (HQLNEHKERLITLGFGNITIVLDDHTPQCNCTPPALCSALS) are Extracellular-facing. Residues 263 to 288 (HGIYYLYPFNIEYQILASTMLYVLWK) traverse the membrane as a helical segment. Residues 289–309 (NIGRRVDSSRHQKMQCRFDGV) are Cytoplasmic-facing. A helical transmembrane segment spans residues 310 to 332 (LVGSVLGLTVLAATIAVVVVYMI). The Extracellular portion of the chain corresponds to 333-342 (HIGRSKSKSE). A helical membrane pass occupies residues 343-368 (SALIMFYLYAITVLLLMGAAGLVGSW). At 369-386 (IYRVDEKSLDESKNPARK) the chain is on the cytoplasmic side. The helical transmembrane segment at 387–411 (LDADLLVATASGSWLLSWGSILAIA) threads the bilayer. The Extracellular portion of the chain corresponds to 412 to 421 (CAETRPPYTW). The chain crosses the membrane as a helical span at residues 422 to 442 (YNLPYSVLVIVEKYVQNIFII). Residues 443–532 (ESVHLEPEGV…QGGMKRRLLR (90 aa)) are Cytoplasmic-facing. A helical transmembrane segment spans residues 533–551 (NITAFLFLCNISLWIPPAF). At 552–569 (GCRPEYDNGLEEIVFGFE) the chain is on the extracellular side. A helical membrane pass occupies residues 570 to 593 (PWIIVVNLAMPFSIFYRMHAAAAL). Over 594-600 (FEVYCKI) the chain is Cytoplasmic.

This sequence belongs to the otopetrin family. As to quaternary structure, homodimer. Interacts with STAT1, independently of STAT1 phosphorylation status.

The protein resides in the cell membrane. It localises to the cell projection. It is found in the microvillus. The catalysed reaction is H(+)(in) = H(+)(out). Activated by both acid and alkali, with proton influx in response to extracellular acid and proton efflux during alkali stimulation. Inhibited by Zn(2+); this inhibition is thought to be pH-sensitive. Currents evoked in response to mild acid (pH 6.0) stimulus may also be mildly potentiated by exposure to Zn(2+). Activated by NH(4)Cl. In terms of biological role, proton-selective ion channel. Biphasically modulated by acid and alkali, mediating proton influx and efflux in response to extracellular acid and base stimulation, respectively. Sour taste receptor, which carries inward currents in response to extracellular acidification. Sensor for ammonium chloride (NH(4)Cl) in taste receptor cells. NH(4)Cl acts by increasing the intracellular pH, thereby generating a driving force for proton entry through OTOP1 channel. Might also participate in alkaline sensation. Plays a role in the regulation of Ca(2+) flux in response to purigenic (ATP, ADP and UDP) stimuli, leading to increase in cytosolic Ca(2+) due to influx of extracellular calcium. May play this role by inhibiting P2Y purinoceptor-mediated Ca(2+) release in a Ca(2+)-dependent manner and promote an influx of Ca(2+) in response to ATP. Through this mechanism and possibly others, plays a role in the formation and function of calcium carbonate-based structures in the vestibular system of the inner ear, called otoconia, that sense gravity and linear acceleration. In obesity, may attenuate adipose tissue inflammation, through the negative regulation of IFNG signaling, hence may play an adaptive role in the maintainance of metabolic homeostasis. Following alkali activation, may also be permeable Na(+), K(+), Cs(+) and Li(+). This chain is Proton channel OTOP1, found in Rattus norvegicus (Rat).